The following is a 219-amino-acid chain: MTQDELKKAVGWAALQYVQPGTIVGVGTGSTAAHFIDALGTMKGQIEGAVSSSDASTEKLKSLGIHVFDLNEVDSLGIYVDGADEINGHMQMIKGGGAALTREKIIASVAEKFICIADASKQVDILGKFPLPVEVIPMARSAVARQLVKLGGRPEYRQGVVTDNGNVILDVHGMEILDPIAMENAINAIPGVVTVGLFANRGADVALIGTPDGVKTIVK.

Substrate contacts are provided by residues Thr-28 to Thr-31, Asp-81 to Asp-84, and Lys-94 to Gly-97. Glu-103 serves as the catalytic Proton acceptor. Substrate is bound at residue Lys-121.

This sequence belongs to the ribose 5-phosphate isomerase family. As to quaternary structure, homodimer.

The enzyme catalyses aldehydo-D-ribose 5-phosphate = D-ribulose 5-phosphate. Its pathway is carbohydrate degradation; pentose phosphate pathway; D-ribose 5-phosphate from D-ribulose 5-phosphate (non-oxidative stage): step 1/1. In terms of biological role, catalyzes the reversible conversion of ribose-5-phosphate to ribulose 5-phosphate. In Shigella boydii serotype 18 (strain CDC 3083-94 / BS512), this protein is Ribose-5-phosphate isomerase A.